Reading from the N-terminus, the 159-residue chain is Transcription elongation factor A protein-like 1 (159 aa).

The tract at residues 1 to 97 is disordered; sequence MDKPRKENEE…PPCGVGKHKL (97 aa). The span at 17–34 shows a compositional bias: basic and acidic residues; sequence KTDEERPPVEHSPEKQSP. Residues serine 28, serine 33, serine 38, serine 39, serine 43, and serine 44 each carry the phosphoserine modification. The span at 37–54 shows a compositional bias: acidic residues; sequence QSSEEQSSEEEFFPEELL. Over residues 64 to 80 the composition is skewed to basic and acidic residues; the sequence is SEERPPQEGLSRKDLFE.

The protein belongs to the TFS-II family. TFA subfamily. Post-translationally, phosphorylation of Ser-38 and Ser-39 is critical for transcriptional repression. In terms of tissue distribution, expressed in all tissues examined. Highly expressed in heart, ovary, prostate and skeletal muscle. Moderately expressed in brain, placenta, testis and small intestine. Weakly expressed in lung, liver and spleen. Expressed in several cancer cell lines.

The protein localises to the nucleus. In terms of biological role, may be involved in transcriptional regulation. Modulates various viral and cellular promoters in a promoter context-dependent manner. For example, transcription from the FOS promoter is increased, while Rous sarcoma virus (RSV) long terminal repeat (LTR) promoter activity is repressed. Does not bind DNA directly. The sequence is that of Transcription elongation factor A protein-like 1 from Homo sapiens (Human).